Here is a 153-residue protein sequence, read N- to C-terminus: Large ribosomal subunit protein uL30 (153 aa).

Belongs to the universal ribosomal protein uL30 family. Part of the 50S ribosomal subunit.

The polypeptide is Large ribosomal subunit protein uL30 (Methanosarcina barkeri (strain Fusaro / DSM 804)).